Here is a 303-residue protein sequence, read N- to C-terminus: tRNA pseudouridine synthase B (303 aa).

Catalysis depends on Asp46, which acts as the Nucleophile.

The protein belongs to the pseudouridine synthase TruB family. Type 1 subfamily.

It catalyses the reaction uridine(55) in tRNA = pseudouridine(55) in tRNA. Its function is as follows. Responsible for synthesis of pseudouridine from uracil-55 in the psi GC loop of transfer RNAs. This is tRNA pseudouridine synthase B from Hydrogenovibrio crunogenus (strain DSM 25203 / XCL-2) (Thiomicrospira crunogena).